Here is a 383-residue protein sequence, read N- to C-terminus: L-lactate dehydrogenase (383 aa).

Residues 1–380 (MIIASTFDYR…TCESLVNTDA (380 aa)) enclose the FMN hydroxy acid dehydrogenase domain. Residue Y24 participates in substrate binding. 2 residues coordinate FMN: S106 and Q127. A substrate-binding site is contributed by Y129. Residue T155 coordinates FMN. R164 contributes to the substrate binding site. K251 provides a ligand contact to FMN. Catalysis depends on H275, which acts as the Proton acceptor. R278 provides a ligand contact to substrate. 306–330 (DSGVRSGLDVVRMIAQGADAVMIGR) contacts FMN.

This sequence belongs to the FMN-dependent alpha-hydroxy acid dehydrogenase family. It depends on FMN as a cofactor.

The protein resides in the cell inner membrane. It carries out the reaction (S)-lactate + A = pyruvate + AH2. Functionally, catalyzes the conversion of L-lactate to pyruvate. Is coupled to the respiratory chain. The sequence is that of L-lactate dehydrogenase from Bartonella tribocorum (strain CIP 105476 / IBS 506).